The primary structure comprises 499 residues: Aspartyl/glutamyl-tRNA(Asn/Gln) amidotransferase subunit B (499 aa).

Belongs to the GatB/GatE family. GatB subfamily. Heterotrimer of A, B and C subunits.

The catalysed reaction is L-glutamyl-tRNA(Gln) + L-glutamine + ATP + H2O = L-glutaminyl-tRNA(Gln) + L-glutamate + ADP + phosphate + H(+). The enzyme catalyses L-aspartyl-tRNA(Asn) + L-glutamine + ATP + H2O = L-asparaginyl-tRNA(Asn) + L-glutamate + ADP + phosphate + 2 H(+). Functionally, allows the formation of correctly charged Asn-tRNA(Asn) or Gln-tRNA(Gln) through the transamidation of misacylated Asp-tRNA(Asn) or Glu-tRNA(Gln) in organisms which lack either or both of asparaginyl-tRNA or glutaminyl-tRNA synthetases. The reaction takes place in the presence of glutamine and ATP through an activated phospho-Asp-tRNA(Asn) or phospho-Glu-tRNA(Gln). This chain is Aspartyl/glutamyl-tRNA(Asn/Gln) amidotransferase subunit B, found in Bartonella quintana (strain Toulouse) (Rochalimaea quintana).